The chain runs to 294 residues: uncharacterized protein (294 aa).

A Tyrosine-protein phosphatase domain is found at 13–151 (QCSQIRPYLY…LIDLEQKLRG (139 aa)). Cysteine 95 (phosphocysteine intermediate) is an active-site residue. A disordered region spans residues 234-294 (PTLLVPSSSS…WRLSFHKDVV (61 aa)).

This sequence belongs to the protein-tyrosine phosphatase family. Non-receptor class dual specificity subfamily.

This is an uncharacterized protein from Caenorhabditis elegans.